A 154-amino-acid chain; its full sequence is Myoglobin (154 aa).

The 147-residue stretch at Gly2 to Lys148 folds into the Globin domain. Phosphoserine is present on Ser4. A nitrite-binding site is contributed by His65. His65 is a binding site for O2. A Phosphothreonine modification is found at Thr68. Heme b is bound at residue His94.

As to quaternary structure, monomeric.

The protein localises to the cytoplasm. Its subcellular location is the sarcoplasm. The enzyme catalyses Fe(III)-heme b-[protein] + nitric oxide + H2O = Fe(II)-heme b-[protein] + nitrite + 2 H(+). It carries out the reaction H2O2 + AH2 = A + 2 H2O. In terms of biological role, monomeric heme protein which primary function is to store oxygen and facilitate its diffusion within muscle tissues. Reversibly binds oxygen through a pentacoordinated heme iron and enables its timely and efficient release as needed during periods of heightened demand. Depending on the oxidative conditions of tissues and cells, and in addition to its ability to bind oxygen, it also has a nitrite reductase activity whereby it regulates the production of bioactive nitric oxide. Under stress conditions, like hypoxia and anoxia, it also protects cells against reactive oxygen species thanks to its pseudoperoxidase activity. The chain is Myoglobin from Bubalus bubalis (Domestic water buffalo).